The chain runs to 84 residues: uncharacterized protein (84 aa).

Residues 25–45 (ILMTVAGFIIAFAILVFQISF) form a helical membrane-spanning segment.

The protein localises to the membrane. This is an uncharacterized protein from Bacillus anthracis.